Reading from the N-terminus, the 314-residue chain is Ribosomal protein L11 methyltransferase (314 aa).

S-adenosyl-L-methionine-binding residues include T163, G184, D206, and N248.

Belongs to the methyltransferase superfamily. PrmA family.

The protein resides in the cytoplasm. It catalyses the reaction L-lysyl-[protein] + 3 S-adenosyl-L-methionine = N(6),N(6),N(6)-trimethyl-L-lysyl-[protein] + 3 S-adenosyl-L-homocysteine + 3 H(+). Methylates ribosomal protein L11. The polypeptide is Ribosomal protein L11 methyltransferase (Lactobacillus acidophilus (strain ATCC 700396 / NCK56 / N2 / NCFM)).